The primary structure comprises 185 residues: uncharacterized protein (185 aa).

The next 5 membrane-spanning stretches (helical) occupy residues 4–24, 35–55, 60–80, 123–143, and 152–172; these read IAWMIVFCEIAFWVVIVLGLA, GLLFLALTPVIDLILLAATGV, GASATAAHGIAAVYIGISIAY, VLAYLIGAGLLAGMIYFINDS, and ILKLWTVIIGIDFLITASYFI.

Its subcellular location is the cell membrane. This is an uncharacterized protein from Bacillus subtilis (strain 168).